The primary structure comprises 421 residues: UDP-N-acetylglucosamine 1-carboxyvinyltransferase (421 aa).

Position 22-23 (Lys22–Asn23) interacts with phosphoenolpyruvate. Residue Arg93 participates in UDP-N-acetyl-alpha-D-glucosamine binding. Residue Cys117 is the Proton donor of the active site. A 2-(S-cysteinyl)pyruvic acid O-phosphothioketal modification is found at Cys117. UDP-N-acetyl-alpha-D-glucosamine-binding positions include Arg122–Leu126, Asp308, and Ile330.

The protein belongs to the EPSP synthase family. MurA subfamily.

It is found in the cytoplasm. It carries out the reaction phosphoenolpyruvate + UDP-N-acetyl-alpha-D-glucosamine = UDP-N-acetyl-3-O-(1-carboxyvinyl)-alpha-D-glucosamine + phosphate. It functions in the pathway cell wall biogenesis; peptidoglycan biosynthesis. In terms of biological role, cell wall formation. Adds enolpyruvyl to UDP-N-acetylglucosamine. The protein is UDP-N-acetylglucosamine 1-carboxyvinyltransferase of Pseudomonas putida (strain W619).